We begin with the raw amino-acid sequence, 120 residues long: Large ribosomal subunit protein bL20 (120 aa).

It belongs to the bacterial ribosomal protein bL20 family.

Its function is as follows. Binds directly to 23S ribosomal RNA and is necessary for the in vitro assembly process of the 50S ribosomal subunit. It is not involved in the protein synthesizing functions of that subunit. The protein is Large ribosomal subunit protein bL20 of Mesoplasma florum (strain ATCC 33453 / NBRC 100688 / NCTC 11704 / L1) (Acholeplasma florum).